The chain runs to 1045 residues: Protein transport protein Sec16B (1045 aa).

The span at 1–13 shows a compositional bias: pro residues; the sequence is MEPWVPQWPPPSR. The segment at 1 to 78 is disordered; it reads MEPWVPQWPP…PQHVPRLGAW (78 aa). A compositionally biased stretch (basic and acidic residues) spans 22-33; sequence DSERGLQRDGYH. A compositionally biased stretch (polar residues) spans 50–60; the sequence is QDVQGSPQPQQ. A phosphoserine mark is found at serine 55 and serine 137. Residues 149 to 168 are compositionally biased toward basic and acidic residues; it reads RHLSEHRPENQSRTFRRDSE. Disordered stretches follow at residues 149-193, 707-733, 748-789, and 813-1045; these read RHLS…QERP, QQKAAADAGEPHSANLDTPGATGTTES, APGC…YSVP, and QTHS…TQPC. Serine 186 is modified (phosphoserine). The central conserved domain (CCD); required for localization to endoplasmic reticulum exit sites stretch occupies residues 267–711; the sequence is APKKFYIPHV…RHQELQQKAA (445 aa). Over residues 773–784 the composition is skewed to low complexity; the sequence is GPAAGPAGAPVP. Phosphoserine is present on residues serine 852, serine 858, serine 866, and serine 867. The span at 916 to 926 shows a compositional bias: acidic residues; it reads EDSSDSPDSEQ. The segment covering 942 to 953 has biased composition (pro residues); sequence SPPPLLESPPLP. Positions 957-966 are enriched in gly residues; it reads AFGGGTGRGE. A compositionally biased stretch (polar residues) spans 989–998; that stretch reads ESASSELYSN.

It belongs to the SEC16 family. SEC16A and SEC16B are each present in multiple copies in a heteromeric complex. Interacts with TFG. Interacts with SEC13. In terms of tissue distribution, liver.

It localises to the endoplasmic reticulum membrane. The protein localises to the golgi apparatus membrane. Plays a role in the organization of the endoplasmic reticulum exit sites (ERES), also known as transitional endoplasmic reticulum (tER). Required for secretory cargo traffic from the endoplasmic reticulum to the Golgi apparatus. Involved in peroxisome biogenesis. Regulates the transport of peroxisomal biogenesis factors PEX3 and PEX16 from the ER to peroxisomes. This is Protein transport protein Sec16B (SEC16B) from Oryctolagus cuniculus (Rabbit).